The sequence spans 250 residues: Peptidyl-tRNA hydrolase (250 aa).

Tyr-14 serves as a coordination point for tRNA. His-19 functions as the Proton acceptor in the catalytic mechanism. TRNA-binding residues include Phe-64, Asn-66, and Asn-112. Residues 192 to 250 are disordered; that stretch reads MGDGNQRPGGVKTDPAQLEKAPPKAQSHIRQARQNQKKPNIPESGPMAEMLKKLLGKKD. Residues 219–229 show a composition bias toward polar residues; the sequence is HIRQARQNQKK. Positions 241–250 are enriched in basic and acidic residues; it reads MLKKLLGKKD.

It belongs to the PTH family. As to quaternary structure, monomer.

It localises to the cytoplasm. The enzyme catalyses an N-acyl-L-alpha-aminoacyl-tRNA + H2O = an N-acyl-L-amino acid + a tRNA + H(+). Its function is as follows. Hydrolyzes ribosome-free peptidyl-tRNAs (with 1 or more amino acids incorporated), which drop off the ribosome during protein synthesis, or as a result of ribosome stalling. In terms of biological role, catalyzes the release of premature peptidyl moieties from peptidyl-tRNA molecules trapped in stalled 50S ribosomal subunits, and thus maintains levels of free tRNAs and 50S ribosomes. The protein is Peptidyl-tRNA hydrolase of Brucella suis (strain ATCC 23445 / NCTC 10510).